The primary structure comprises 34 residues: MDSAISSPEIFIALVVAAHAAILALRLSVSLYRA.

Residues 5–25 (ISSPEIFIALVVAAHAAILAL) form a helical membrane-spanning segment.

It belongs to the PsaM family.

It localises to the cellular thylakoid membrane. The protein is Photosystem I reaction center subunit XII of Synechococcus sp. (strain CC9902).